Reading from the N-terminus, the 103-residue chain is Conantokin R1-A (103 aa).

The N-terminal stretch at 1–21 (MQLYTYLYLLVPLVTFHLILG) is a signal peptide. Positions 22–79 (TGTLDHGGALTERRSTDATALKPEPVLQKSAARSTDDNGKDRLTQMKRILKKRGNNPR) are excised as a propeptide. Positions 34–83 (RRSTDATALKPEPVLQKSAARSTDDNGKDRLTQMKRILKKRGNNPRADEE) are disordered. A compositionally biased stretch (basic and acidic residues) spans 55–65 (STDDNGKDRLT). 3 positions are modified to 4-carboxyglutamate: glutamate 82, glutamate 83, and glutamate 89.

This sequence belongs to the conotoxin B superfamily. The cofactor is Ca(2+). It depends on Mg(2+) as a cofactor. Expressed by the venom duct.

Its subcellular location is the secreted. Functionally, conantokins inhibit N-methyl-D-aspartate (NMDA) receptors. This toxin has the highest potency for the NR2B/GRIN2B subunit (IC(50)=0.11 uM), followed by NR2D/GRIN2D (IC(50)=0.48 uM), NR2A/GRIN2A (IC(50)=2.1 uM), and NR2C/GRIN2C (IC(50)=6.1 uM) subunits when tested on rat receptors. This is Conantokin R1-A from Conus rolani (Cone snail).